Consider the following 107-residue polypeptide: UPF0213 protein SG0387 (107 aa).

The GIY-YIG domain occupies serine 4 to histidine 79.

This sequence belongs to the UPF0213 family.

The chain is UPF0213 protein SG0387 from Sodalis glossinidius (strain morsitans).